The primary structure comprises 871 residues: Alanine--tRNA ligase (871 aa).

Residues His-561, His-565, Cys-665, and His-669 each coordinate Zn(2+).

This sequence belongs to the class-II aminoacyl-tRNA synthetase family. Zn(2+) is required as a cofactor.

The protein resides in the cytoplasm. The enzyme catalyses tRNA(Ala) + L-alanine + ATP = L-alanyl-tRNA(Ala) + AMP + diphosphate. Catalyzes the attachment of alanine to tRNA(Ala) in a two-step reaction: alanine is first activated by ATP to form Ala-AMP and then transferred to the acceptor end of tRNA(Ala). Also edits incorrectly charged Ser-tRNA(Ala) and Gly-tRNA(Ala) via its editing domain. This is Alanine--tRNA ligase from Dehalococcoides mccartyi (strain ATCC BAA-2100 / JCM 16839 / KCTC 5957 / BAV1).